Consider the following 574-residue polypeptide: Glycine--tRNA ligase (574 aa).

Positions 96 and 162 each coordinate substrate. ATP-binding positions include 194–196, 204–209, 327–328, and 450–453; these read RNE, IRLREF, EC, and GIDR. 209–213 is a substrate binding site; that stretch reads FTQAE. Residue 446–450 participates in substrate binding; it reads EPSYG.

This sequence belongs to the class-II aminoacyl-tRNA synthetase family.

Its subcellular location is the cytoplasm. It catalyses the reaction tRNA(Gly) + glycine + ATP = glycyl-tRNA(Gly) + AMP + diphosphate. Functionally, catalyzes the attachment of glycine to tRNA(Gly). This is Glycine--tRNA ligase from Methanococcus vannielii (strain ATCC 35089 / DSM 1224 / JCM 13029 / OCM 148 / SB).